We begin with the raw amino-acid sequence, 183 residues long: MVMCVRAVLVCVLLELSRAAPHAHINRLALFPDKSAWCEAKNITQIVGHTGCTPRSIQNRACLGQCFSYSVPNTFPQSTESLVHCDSCMPAQTQWEVVTLDCSGSDEAPRVDKLVERILHCSCQSCSKESSQEGALLQLYPHEGAQDLPSLPDATHTHPQHAHMQADQRDADAHLDMHAPEAG.

The N-terminal stretch at M1 to A19 is a signal peptide. Intrachain disulfides connect C38/C88, C52/C102, C62/C121, C66/C123, and C85/C126. The CTCK domain maps to C38–S127. Residues A145 to D170 are disordered.

It belongs to the DAN family.

It is found in the secreted. May act as a tumor suppressor. The protein is Neuroblastoma suppressor of tumorigenicity 1 (nbl1) of Danio rerio (Zebrafish).